A 127-amino-acid polypeptide reads, in one-letter code: Spore germination protein 1 (127 aa).

The N-terminal stretch at 1–25 (MNIKNSLILIISTIFVLSMINGGLT) is a signal peptide. Asparagine 54 and asparagine 118 each carry an N-linked (GlcNAc...) asparagine glycan.

The protein belongs to the Dictyostelium gerABC family.

It is found in the secreted. This is Spore germination protein 1 (gerA) from Dictyostelium discoideum (Social amoeba).